We begin with the raw amino-acid sequence, 538 residues long: Pentachlorophenol 4-monooxygenase (538 aa).

Residues Ala-16–Arg-45 and Tyr-288–Asp-298 contribute to the FAD site.

This sequence belongs to the PheA/TfdB FAD monooxygenase family. Homodimer. FAD is required as a cofactor.

The enzyme catalyses pentachlorophenol + NADPH + O2 + H(+) = 2,3,5,6-tetrachloro-1,4-benzoquinone + chloride + NADP(+) + H2O. It carries out the reaction 2,3,5,6-tetrachlorophenol + NADPH + O2 = 2,3,5,6-tetrachlorohydroquinone + NADP(+) + H2O. It participates in xenobiotic degradation; pentachlorophenol degradation. Functionally, dechlorination of pentachlorophenol to tetrachlorobenzoquinone. Also removes hydrogen and nitro, amino, and cyano groups from benzene ring at the para position in relation to the hydroxyl of phenol. The sequence is that of Pentachlorophenol 4-monooxygenase (pcpB) from Sphingobium chlorophenolicum.